Reading from the N-terminus, the 156-residue chain is Small ribosomal subunit protein uS7 (156 aa).

This sequence belongs to the universal ribosomal protein uS7 family. In terms of assembly, part of the 30S ribosomal subunit. Contacts proteins S9 and S11.

Its function is as follows. One of the primary rRNA binding proteins, it binds directly to 16S rRNA where it nucleates assembly of the head domain of the 30S subunit. Is located at the subunit interface close to the decoding center, probably blocks exit of the E-site tRNA. The chain is Small ribosomal subunit protein uS7 from Geobacter sp. (strain M21).